A 280-amino-acid polypeptide reads, in one-letter code: H-2 class II histocompatibility antigen gamma chain (280 aa).

The Cytoplasmic portion of the chain corresponds to 1–30; it reads MDDQRDLISNHEQLPILGQRARAPESNCNR. The residue at position 9 (Ser9) is a Phosphoserine. A helical; Signal-anchor for type II membrane protein transmembrane segment spans residues 31–56; it reads GVLYTSVSVLVALLLAGQATTAYFLY. Over 57–280 the chain is Extracellular; it reads QQQGRLDKLT…TKQDMGQMFL (224 aa). N-linked (GlcNAc...) asparagine glycans are attached at residues Asn114 and Asn120. Residues 194-255 enclose the Thyroglobulin type-1 domain; the sequence is LTKCQEEVSH…HTKSRGRHNC (62 aa). 3 disulfides stabilise this stretch: Cys197–Cys216, Cys227–Cys234, and Cys236–Cys255. The disordered stretch occupies residues 246–268; it reads HTKSRGRHNCSEPLDMEDPSSGL. O-linked (Xyl...) (chondroitin sulfate) serine glycosylation is present at Ser266.

In terms of assembly, nonamer composed of three alpha/beta/gamma heterotrimers. Interacts with CD44; this complex is essential for the MIF-induced signaling cascade that results in B cell survival. Interacts with the mature form of CTSL; the complex survive in neutral pH environment.

The protein resides in the late endosome. The protein localises to the lysosome. Its subcellular location is the cell membrane. It localises to the endoplasmic reticulum membrane. It is found in the golgi apparatus. The protein resides in the trans-Golgi network. The protein localises to the endosome. Its subcellular location is the secreted. Plays a critical role in MHC class II antigen processing by stabilizing peptide-free class II alpha/beta heterodimers in a complex soon after their synthesis and directing transport of the complex from the endoplasmic reticulum to compartments where peptide loading of class II takes place. Enhance also the stimulation of T-cell responses through interaction with CD44. In terms of biological role, binds to the peptide-binding site of MHC class II alpha/beta heterodimers forming an alpha-beta-CLIP complex, thereby preventing the loading of antigenic peptides to the MHC class II complex until its release by HLA-DM in the endosome. Functionally, stabilizes the conformation of mature CTSL by binding to its active site and serving as a chaperone to help maintain a pool of mature enzyme in endocytic compartments and extracellular space of antigen-presenting cells (APCs). In Rattus norvegicus (Rat), this protein is H-2 class II histocompatibility antigen gamma chain.